Here is a 347-residue protein sequence, read N- to C-terminus: Autoinducer 2 import system permease protein LsrC (347 aa).

9 helical membrane passes run L14 to V34, M39 to L59, G72 to C92, L93 to L113, I115 to W135, V155 to W175, L213 to P233, V249 to A269, and I284 to D304.

Belongs to the binding-protein-dependent transport system permease family. AraH/RbsC subfamily. As to quaternary structure, the complex is composed of two ATP-binding proteins (LsrA), two transmembrane proteins (LsrC and LsrD) and a solute-binding protein (LsrB).

Its subcellular location is the cell inner membrane. Part of the ABC transporter complex LsrABCD involved in autoinducer 2 (AI-2) import. Probably responsible for the translocation of the substrate across the membrane. This chain is Autoinducer 2 import system permease protein LsrC (lsrC), found in Salmonella choleraesuis (strain SC-B67).